Reading from the N-terminus, the 317-residue chain is Petrobactin-binding protein YclQ (317 aa).

A signal peptide spans 1 to 19; the sequence is MKKFALLFIALVTAVVISA. C20 is lipidated: N-palmitoyl cysteine. C20 is lipidated: S-diacylglycerol cysteine. The 262-residue stretch at 56-317 folds into the Fe/B12 periplasmic-binding domain; sequence KVVVFDFGSL…IKEVKDGLEK (262 aa).

The protein belongs to the bacterial solute-binding protein 8 family. The complex is composed of two ATP-binding proteins (YclP), two transmembrane proteins (YclN and YclO) and a solute-binding protein (YclQ). Interacts with FloT.

It is found in the cell membrane. It localises to the membrane raft. Part of the ABC transporter complex YclNOPQ involved in uptake of ferric-petrobactin. Petrobactin is a photoreactive 3,4-catecholate siderophore produced by many members of the B.cereus group, including B.anthracis. Binds selectively iron-free and ferric petrobactin and the petrobactin precursor 3,4-dihydroxybenzoic acid (3,4-DHB). This chain is Petrobactin-binding protein YclQ (yclQ), found in Bacillus subtilis (strain 168).